A 160-amino-acid chain; its full sequence is Serine-protein kinase RsbW (160 aa).

Belongs to the anti-sigma-factor family.

The catalysed reaction is L-seryl-[protein] + ATP = O-phospho-L-seryl-[protein] + ADP + H(+). It carries out the reaction L-threonyl-[protein] + ATP = O-phospho-L-threonyl-[protein] + ADP + H(+). Functionally, negative regulator of sigma-B activity. Phosphorylates and inactivates its specific antagonist protein, RsbV. Upon phosphorylation of RsbV, RsbW is released and binds to sigma-B, thereby blocking its ability to form an RNA polymerase holoenzyme (E-sigma-B). This is Serine-protein kinase RsbW from Bacillus licheniformis.